A 393-amino-acid polypeptide reads, in one-letter code: Formate-dependent phosphoribosylglycinamide formyltransferase (393 aa).

N(1)-(5-phospho-beta-D-ribosyl)glycinamide is bound by residues 22–23 (EL) and E82. ATP-binding positions include R114, K155, 160-165 (SSGHGQ), 195-198 (EGFI), and E203. In terms of domain architecture, ATP-grasp spans 119-308 (RLAAEELGLK…QFALHARAIL (190 aa)). Mg(2+) is bound by residues E267 and E279. N(1)-(5-phospho-beta-D-ribosyl)glycinamide-binding positions include D286, K356, and 363 to 364 (RR).

This sequence belongs to the PurK/PurT family. Homodimer.

It catalyses the reaction N(1)-(5-phospho-beta-D-ribosyl)glycinamide + formate + ATP = N(2)-formyl-N(1)-(5-phospho-beta-D-ribosyl)glycinamide + ADP + phosphate + H(+). The protein operates within purine metabolism; IMP biosynthesis via de novo pathway; N(2)-formyl-N(1)-(5-phospho-D-ribosyl)glycinamide from N(1)-(5-phospho-D-ribosyl)glycinamide (formate route): step 1/1. Functionally, involved in the de novo purine biosynthesis. Catalyzes the transfer of formate to 5-phospho-ribosyl-glycinamide (GAR), producing 5-phospho-ribosyl-N-formylglycinamide (FGAR). Formate is provided by PurU via hydrolysis of 10-formyl-tetrahydrofolate. The chain is Formate-dependent phosphoribosylglycinamide formyltransferase from Actinobacillus pleuropneumoniae serotype 5b (strain L20).